The sequence spans 283 residues: Pantothenate synthetase (283 aa).

26–33 (MGNLHDGH) lines the ATP pocket. The active-site Proton donor is histidine 33. Residue glutamine 57 participates in (R)-pantoate binding. Residue glutamine 57 coordinates beta-alanine. Position 148–151 (148–151 (GKKD)) interacts with ATP. (R)-pantoate is bound at residue glutamine 154. Residues alanine 177 and 185–188 (LSSR) contribute to the ATP site.

This sequence belongs to the pantothenate synthetase family. As to quaternary structure, homodimer.

Its subcellular location is the cytoplasm. The enzyme catalyses (R)-pantoate + beta-alanine + ATP = (R)-pantothenate + AMP + diphosphate + H(+). It participates in cofactor biosynthesis; (R)-pantothenate biosynthesis; (R)-pantothenate from (R)-pantoate and beta-alanine: step 1/1. Its function is as follows. Catalyzes the condensation of pantoate with beta-alanine in an ATP-dependent reaction via a pantoyl-adenylate intermediate. The sequence is that of Pantothenate synthetase from Delftia acidovorans (strain DSM 14801 / SPH-1).